We begin with the raw amino-acid sequence, 421 residues long: UDP-N-acetylglucosamine 1-carboxyvinyltransferase (421 aa).

Residue 22–23 (KN) participates in phosphoenolpyruvate binding. Arg-92 is a UDP-N-acetyl-alpha-D-glucosamine binding site. The Proton donor role is filled by Cys-116. 2-(S-cysteinyl)pyruvic acid O-phosphothioketal is present on Cys-116. Residues 121 to 125 (RPVDQ), Asp-308, and Ile-330 each bind UDP-N-acetyl-alpha-D-glucosamine.

This sequence belongs to the EPSP synthase family. MurA subfamily.

The protein resides in the cytoplasm. The catalysed reaction is phosphoenolpyruvate + UDP-N-acetyl-alpha-D-glucosamine = UDP-N-acetyl-3-O-(1-carboxyvinyl)-alpha-D-glucosamine + phosphate. It participates in cell wall biogenesis; peptidoglycan biosynthesis. Its function is as follows. Cell wall formation. Adds enolpyruvyl to UDP-N-acetylglucosamine. The chain is UDP-N-acetylglucosamine 1-carboxyvinyltransferase from Ralstonia nicotianae (strain ATCC BAA-1114 / GMI1000) (Ralstonia solanacearum).